The primary structure comprises 570 residues: Zinc finger and BTB domain-containing protein 44 (570 aa).

Residue Lys-4 forms a Glycyl lysine isopeptide (Lys-Gly) (interchain with G-Cter in SUMO2) linkage. A BTB domain is found at 31–98 (CDITIRVQDK…AYTATLSINT (68 aa)). Ser-135, Ser-159, Ser-161, Ser-165, Ser-191, and Ser-194 each carry phosphoserine. 2 disordered regions span residues 194–220 (SPVKCGTQTSSPQVLNSSASYSENRNQ) and 243–267 (EKVKQAENTRTLELPGPSETGRRMA). Positions 199–220 (GTQTSSPQVLNSSASYSENRNQ) are enriched in polar residues. Thr-200 is subject to Phosphothreonine. Residue Lys-290 forms a Glycyl lysine isopeptide (Lys-Gly) (interchain with G-Cter in SUMO2) linkage. The segment at 295–369 (SDEEVHEEVS…NAPPDDDDRL (75 aa)) is disordered. A compositionally biased stretch (low complexity) spans 304–318 (SQPVSASQSSLSDQQ). Residues 352–361 (TLQSTSSTNA) show a composition bias toward polar residues. 4 C2H2-type zinc fingers span residues 399–421 (FQCPTCGVRFTRIQNLKQHMLIH), 427–449 (FQCDRCGKKFTRAYSLKMHRLKH), 455–479 (FRCQICSATFTSFGEYKHHMRVSRH), and 487–511 (YECKTCGAMFTNSGNLIVHLRSLNH).

Its subcellular location is the nucleus. In terms of biological role, may be involved in transcriptional regulation. The sequence is that of Zinc finger and BTB domain-containing protein 44 (ZBTB44) from Homo sapiens (Human).